The sequence spans 273 residues: MDSLTETTNALSNDTHAQGYQSVSTTRHVGHIREVVYDCVVEEFPVALIYNGISHAVMMTTPLDLEVFAIGFSLTEAIIDHPRQIYDIEIIKSDLGIQVEITIASEAFIKLKTHRRTLAGQTGCGICGIESLQQIQHTFPPVTHDFFVHWLDQIPDAMVQLQQQQPISAVTGGAHAAAWVVNGNILTVFEDVGRHNALDKLLGHLVKHDIDRSQGFVLMTSRASYELVKKCAQLNISLLATISAPTSLAIELAKRSGLKLASFCRQSRYVVYS.

The active-site Cysteine persulfide intermediate is Cys124. Position 263 to 268 (263 to 268) interacts with Mo-bis(molybdopterin guanine dinucleotide); that stretch reads FCRQSR.

Belongs to the FdhD family.

The protein resides in the cytoplasm. Its function is as follows. Required for formate dehydrogenase (FDH) activity. Acts as a sulfur carrier protein that transfers sulfur from IscS to the molybdenum cofactor prior to its insertion into FDH. This Acinetobacter baylyi (strain ATCC 33305 / BD413 / ADP1) protein is Sulfur carrier protein FdhD.